We begin with the raw amino-acid sequence, 323 residues long: PTS system mannose-specific EIIAB component (323 aa).

Residues 2-124 enclose the PTS EIIA type-4 domain; the sequence is TIAIVIGTHG…VALAVETGRE (123 aa). His-10 acts as the Tele-phosphohistidine intermediate; for EIIA activity in catalysis. A Phosphohistidine; by HPr modification is found at His-10. Lys-55 bears the N6-acetyllysine mark. The interval 137–155 is hinge; that stretch reads AAPAPAAAAPKAAPTPAKP. The PTS EIIB type-4 domain maps to 157 to 320; sequence GPNDYMVIGL…KLKMMDLISK (164 aa). The active-site Pros-phosphohistidine intermediate; for EIIB activity is His-175. Position 175 is a phosphohistidine; by EIIA (His-175). The residue at position 234 (Lys-234) is an N6-acetyllysine.

As to quaternary structure, homodimer.

The protein resides in the cytoplasm. It is found in the cell inner membrane. The catalysed reaction is D-mannose(out) + N(pros)-phospho-L-histidyl-[protein] = D-mannose 6-phosphate(in) + L-histidyl-[protein]. Functionally, the phosphoenolpyruvate-dependent sugar phosphotransferase system (sugar PTS), a major carbohydrate active transport system, catalyzes the phosphorylation of incoming sugar substrates concomitantly with their translocation across the cell membrane. The enzyme II ManXYZ PTS system is involved in mannose transport. The polypeptide is PTS system mannose-specific EIIAB component (manX) (Escherichia coli O157:H7).